We begin with the raw amino-acid sequence, 196 residues long: MWFMYLLSWLSLFIQVAFITLAVAAGLYYLAELIEEYTVATSRIIKYMIWFSTAVLIGLYVFERFPTSMIGVGLFTNLVYFGLLQTFPFIMLTSPNFILSCGLVVVNHYLAFQFFAEEYYPFSEVLAYFTFCLWIIPFAFFVSLSAGENVLPSTMQPGDDVVSNYFTKGKRGKRLGILVVFSFIKEAILPSRQKIY.

Transmembrane regions (helical) follow at residues 3–23 (FMYL…TLAV), 42–62 (SRII…LYVF), 70–90 (IGVG…FPFI), 97–117 (FILS…FFAE), and 125–145 (VLAY…VSLS).

This sequence belongs to the SVP26 family.

It is found in the membrane. This chain is Protein TEX261 (TEX261), found in Homo sapiens (Human).